Reading from the N-terminus, the 383-residue chain is Chitinase-3-like protein 1 (383 aa).

Positions 1-21 (MGLRAAHTGFVVLVLLQSCAA) are cleaved as a signal peptide. Residues 22–383 (YKLICYYTSW…SAIKDVLARV (362 aa)) enclose the GH18 domain. C26 and C51 are disulfide-bonded. N-linked (GlcNAc...) asparagine glycosylation is present at N60. Chitin is bound by residues 70 to 71 (EW), 97 to 100 (GGWN), Y141, 204 to 207 (LTYD), and R263. A disulfide bridge connects residues C300 and C364. Residues 324–338 (QWVAYDDQESVKNKA) form an important for AKT1 activation and IL8 production region. A chitin-binding site is contributed by W352. Residue N367 is glycosylated (N-linked (GlcNAc...) asparagine).

The protein belongs to the glycosyl hydrolase 18 family. As to quaternary structure, monomer. In terms of processing, glycosylated. Mammary secretions collected during the non-lactating period.

It is found in the secreted. The protein resides in the extracellular space. The protein localises to the cytoplasm. Its subcellular location is the perinuclear region. It localises to the endoplasmic reticulum. In terms of biological role, carbohydrate-binding lectin with a preference for chitin. Has no chitinase activity. May play a role in tissue remodeling and in the capacity of cells to respond to and cope with changes in their environment. Plays a role in T-helper cell type 2 (Th2) inflammatory response and IL-13-induced inflammation, regulating allergen sensitization, inflammatory cell apoptosis, dendritic cell accumulation and M2 macrophage differentiation. Facilitates invasion of pathogenic enteric bacteria into colonic mucosa and lymphoid organs. Mediates activation of AKT1 signaling pathway and subsequent IL8 production in colonic epithelial cells. Regulates antibacterial responses in lung by contributing to macrophage bacterial killing, controlling bacterial dissemination and augmenting host tolerance. Also regulates hyperoxia-induced injury, inflammation and epithelial apoptosis in lung. The protein is Chitinase-3-like protein 1 (CHI3L1) of Bos taurus (Bovine).